Consider the following 441-residue polypeptide: Chromosomal replication initiator protein DnaA (441 aa).

The interval 1 to 80 (MQNDVLARWE…MHQEISLQFI (80 aa)) is domain I, interacts with DnaA modulators. Residues 80-102 (ILAGQEVDQPKPKERSSEETYIN) form a domain II region. Residues 103–320 (ILNPRYTFDT…GALIRVSAFS (218 aa)) are domain III, AAA+ region. ATP-binding residues include Gly-147, Gly-149, Lys-150, and Thr-151. A domain IV, binds dsDNA region spans residues 321–441 (SLEQRDATPQ…IKELKKRIGE (121 aa)).

This sequence belongs to the DnaA family. Oligomerizes as a right-handed, spiral filament on DNA at oriC.

The protein resides in the cytoplasm. In terms of biological role, plays an essential role in the initiation and regulation of chromosomal replication. ATP-DnaA binds to the origin of replication (oriC) to initiate formation of the DNA replication initiation complex once per cell cycle. Binds the DnaA box (a 9 base pair repeat at the origin) and separates the double-stranded (ds)DNA. Forms a right-handed helical filament on oriC DNA; dsDNA binds to the exterior of the filament while single-stranded (ss)DNA is stabiized in the filament's interior. The ATP-DnaA-oriC complex binds and stabilizes one strand of the AT-rich DNA unwinding element (DUE), permitting loading of DNA polymerase. After initiation quickly degrades to an ADP-DnaA complex that is not apt for DNA replication. Binds acidic phospholipids. The chain is Chromosomal replication initiator protein DnaA from Desulforamulus reducens (strain ATCC BAA-1160 / DSM 100696 / MI-1) (Desulfotomaculum reducens).